The following is a 332-amino-acid chain: Fructose-1,6-bisphosphatase class 1 (332 aa).

Residues E91, D112, L114, and D115 each contribute to the Mg(2+) site. Substrate contacts are provided by residues 115–118, N208, Y241, and K271; that span reads DGSS. E277 lines the Mg(2+) pocket.

Belongs to the FBPase class 1 family. Homotetramer. The cofactor is Mg(2+).

It is found in the cytoplasm. It carries out the reaction beta-D-fructose 1,6-bisphosphate + H2O = beta-D-fructose 6-phosphate + phosphate. The protein operates within carbohydrate biosynthesis; Calvin cycle. This chain is Fructose-1,6-bisphosphatase class 1, found in Chlorobium phaeobacteroides (strain DSM 266 / SMG 266 / 2430).